A 171-amino-acid chain; its full sequence is uncharacterized protein (171 aa).

Belongs to the mimivirus L87/L94 family.

This is an uncharacterized protein from Acanthamoeba polyphaga (Amoeba).